A 154-amino-acid chain; its full sequence is Large ribosomal subunit protein uL13 (154 aa).

The disordered stretch occupies residues 131–154 (DHKHEAQQPEVVDFKSMNSKNTRG).

It belongs to the universal ribosomal protein uL13 family. Part of the 50S ribosomal subunit.

Functionally, this protein is one of the early assembly proteins of the 50S ribosomal subunit, although it is not seen to bind rRNA by itself. It is important during the early stages of 50S assembly. In Maricaulis maris (strain MCS10) (Caulobacter maris), this protein is Large ribosomal subunit protein uL13.